Here is a 252-residue protein sequence, read N- to C-terminus: Beta-carotene isomerase D27, chloroplastic (252 aa).

The transit peptide at 1–43 (MDSKMIAHNMSLTPTLAQWKKLRLKPKHTFVVGVLARPTDDIS) directs the protein to the chloroplast.

Fe cation is required as a cofactor. In terms of tissue distribution, highly expressed in roots. Expressed at low levels in leaves and stems.

Its subcellular location is the plastid. The protein localises to the chloroplast. It catalyses the reaction all-trans-beta-carotene = 9-cis-beta-carotene. Functionally, involved in strigolactones biosynthesis by catalyzing the isomerization of the C9-C10 double bond in all-trans-beta-carotene leading to 9-cis-beta-carotene and providing the substrate for CCD7. Strigolactones are hormones that inhibit tillering and shoot branching through the MAX-dependent pathway, contribute to the regulation of shoot architectural response to phosphate-limiting conditions and function as rhizosphere signals that stimulate hyphal branching of arbuscular mycorrhizal fungi and trigger seed germination of root parasitic weeds. The sequence is that of Beta-carotene isomerase D27, chloroplastic from Medicago truncatula (Barrel medic).